The primary structure comprises 165 residues: uncharacterized protein (165 aa).

The tract at residues Cys-53–Gly-123 is disordered. Positions Gly-58–Ala-71 are enriched in low complexity.

This is an uncharacterized protein from Treponema pallidum (strain Nichols).